The primary structure comprises 340 residues: CRISPR system Cmr subunit Cmr6 (340 aa).

It belongs to the CRISPR system Cmr6 family. As to quaternary structure, part of the type III-B Cmr ribonucleoprotein (RNP) complex, an elongated RNP with Cmr2 and Cmr3 as the base, with Cmr4 and Cmr5 forming a helical core along the mature crRNA (39 or 45 nt in length), while the complex is capped by Cmr6 and Cmr1. The 5' end of the crRNA is bound to Cmr2 and Cmr3, while Cmr6 and a Cmr1 subunit (Cmr1-1 or Cmr1-2) cap the 3' end of the crRNA. The target RNA lies antiparallel to the crRNA, with its 5' end near Cmr1 and Cmr6 and its 3' end near Cmr2 and Cmr3; major target cleavage occurs nears the junction of Cmr1/Cmr6 and Cmr4/Cmr, with minor cleavage occurring at 6 nt intervals which coincide with the proposed spacing of Cmr4 subunits. Interacts with Cmr4 and Cmr5.

It is found in the cytoplasm. CRISPR (clustered regularly interspaced short palindromic repeat), is an adaptive immune system that provides protection against mobile genetic elements (viruses, transposable elements and conjugative plasmids). CRISPR clusters contain sequences complementary to antecedent mobile elements and target invading nucleic acids. CRISPR clusters are transcribed and processed into CRISPR RNA (crRNA), formerly called psiRNA (prokaryotic silencing) in this organism. Part of the Cmr ribonucleoprotein complex which has divalent cation-dependent endoribonuclease activity specific for ssRNA complementary to the crRNA (target RNA), generating 5' hydroxy- and 3' phosphate or 2'-3' cyclic phosphate termini. Cmr4 is probably the subunit that cleaves target RNA. Cmr complex does not cleave ssDNA complementary to the crRNA. Cleavage of invading RNA is guided by the crRNA; substrate cleavage occurs a fixed distance (14 nt) from the 3' end of the crRNA. In vitro reconstitution shows Cmr1-2 and Cmr5 are not absolutely necessary for target cleavage. The sequence is that of CRISPR system Cmr subunit Cmr6 from Pyrococcus furiosus (strain ATCC 43587 / DSM 3638 / JCM 8422 / Vc1).